A 236-amino-acid chain; its full sequence is Ubiquinone biosynthesis O-methyltransferase (236 aa).

Residues arginine 36, glycine 60, aspartate 81, and leucine 123 each contribute to the S-adenosyl-L-methionine site.

Belongs to the methyltransferase superfamily. UbiG/COQ3 family.

The catalysed reaction is a 3-demethylubiquinol + S-adenosyl-L-methionine = a ubiquinol + S-adenosyl-L-homocysteine + H(+). It catalyses the reaction a 3-(all-trans-polyprenyl)benzene-1,2-diol + S-adenosyl-L-methionine = a 2-methoxy-6-(all-trans-polyprenyl)phenol + S-adenosyl-L-homocysteine + H(+). It functions in the pathway cofactor biosynthesis; ubiquinone biosynthesis. In terms of biological role, O-methyltransferase that catalyzes the 2 O-methylation steps in the ubiquinone biosynthetic pathway. The sequence is that of Ubiquinone biosynthesis O-methyltransferase from Rickettsia canadensis (strain McKiel).